The chain runs to 591 residues: Oxaloacetate decarboxylase alpha chain (591 aa).

Residues 3–263 (IAITDVVLRD…DTGLDILKLE (261 aa)) enclose the Pyruvate carboxyltransferase domain. The region spanning 518–591 (PAGAGTPVTA…SVGDTLMTLA (74 aa)) is the Biotinyl-binding domain. Lys-557 carries the post-translational modification N6-biotinyllysine.

As to quaternary structure, composed of three chains (alpha, beta, and gamma). It depends on biotin as a cofactor.

The enzyme catalyses oxaloacetate + 2 Na(+)(in) + H(+) = pyruvate + 2 Na(+)(out) + CO2. Catalyzes the decarboxylation of oxaloacetate coupled to Na(+) translocation. This is Oxaloacetate decarboxylase alpha chain (oadA1) from Salmonella typhimurium (strain LT2 / SGSC1412 / ATCC 700720).